A 110-amino-acid polypeptide reads, in one-letter code: U12-hexatoxin-Hi1a (110 aa).

A signal peptide spans 1–18 (MRVALVFLVLSILAATHG). Intrachain disulfides connect C72/C86, C79/C91, and C85/C104.

As to expression, expressed by the venom gland.

The protein resides in the secreted. Its function is as follows. Probable ion channel inhibitor. This is U12-hexatoxin-Hi1a from Hadronyche infensa (Fraser island funnel-web spider).